Reading from the N-terminus, the 632-residue chain is Probable electron transfer flavoprotein-ubiquinone oxidoreductase, mitochondrial (632 aa).

93–107 is a binding site for FAD; that stretch reads VCIVGAGPAGLSAAI. Residues C575, C601, C604, and C607 each contribute to the [4Fe-4S] cluster site. In terms of domain architecture, 4Fe-4S ferredoxin-type spans 592-621; sequence KRFVINSQNCVHCKTCDIKDPLQGIQWKTP.

It belongs to the ETF-QO/FixC family. [4Fe-4S] cluster is required as a cofactor. It depends on FAD as a cofactor.

The protein localises to the mitochondrion inner membrane. The catalysed reaction is a ubiquinone + reduced [electron-transfer flavoprotein] = a ubiquinol + oxidized [electron-transfer flavoprotein] + H(+). Its function is as follows. Accepts electrons from ETF and reduces ubiquinone. In Schizosaccharomyces pombe (strain 972 / ATCC 24843) (Fission yeast), this protein is Probable electron transfer flavoprotein-ubiquinone oxidoreductase, mitochondrial.